The primary structure comprises 249 residues: MPFEIVFDGAKEFADLIATASNLIDEAAFKVTDEGISMRAMDPSRVVLIDLNLPESIFSKYEVEEEETIGINMDHFKKILKRGKGKDTLILKKGDENFLEITFEGTAKRTFRLPLIDVEELELDLPELPFTAKVVLLGEVLKEAVKDASLVSDAMKFIAKENEFSMRAEGETNEVEIKLTLEDEGLLDIEVEEETKSAYGISYLADMVKGIGKADEVTIRFGNEMPLQMDYFIRDEGKLTFLLAPRVED.

It belongs to the PCNA family. In terms of assembly, homotrimer. The subunits circularize to form a toroid; DNA passes through its center. Replication factor C (RFC) is required to load the toroid on the DNA.

Its function is as follows. Sliding clamp subunit that acts as a moving platform for DNA processing. Responsible for tethering the catalytic subunit of DNA polymerase and other proteins to DNA during high-speed replication. This chain is DNA polymerase sliding clamp, found in Thermococcus fumicolans.